The sequence spans 207 residues: Large ribosomal subunit protein uL4 (207 aa).

A disordered region spans residues 48–70 (KAQKTRSEVSGGGAKPWRQKGTG).

This sequence belongs to the universal ribosomal protein uL4 family. Part of the 50S ribosomal subunit.

One of the primary rRNA binding proteins, this protein initially binds near the 5'-end of the 23S rRNA. It is important during the early stages of 50S assembly. It makes multiple contacts with different domains of the 23S rRNA in the assembled 50S subunit and ribosome. Its function is as follows. Forms part of the polypeptide exit tunnel. The polypeptide is Large ribosomal subunit protein uL4 (Francisella tularensis subsp. mediasiatica (strain FSC147)).